A 397-amino-acid polypeptide reads, in one-letter code: CCA-adding enzyme (397 aa).

Gly-26 and Arg-29 together coordinate ATP. Positions 26 and 29 each coordinate CTP. Mg(2+)-binding residues include Asp-39 and Asp-41. 5 residues coordinate ATP: Arg-110, Asp-153, Arg-156, Arg-159, and Arg-162. CTP is bound by residues Arg-110, Asp-153, Arg-156, Arg-159, and Arg-162.

The protein belongs to the tRNA nucleotidyltransferase/poly(A) polymerase family. Bacterial CCA-adding enzyme type 3 subfamily. As to quaternary structure, homodimer. Mg(2+) is required as a cofactor.

It catalyses the reaction a tRNA precursor + 2 CTP + ATP = a tRNA with a 3' CCA end + 3 diphosphate. The enzyme catalyses a tRNA with a 3' CCA end + 2 CTP + ATP = a tRNA with a 3' CCACCA end + 3 diphosphate. Functionally, catalyzes the addition and repair of the essential 3'-terminal CCA sequence in tRNAs without using a nucleic acid template. Adds these three nucleotides in the order of C, C, and A to the tRNA nucleotide-73, using CTP and ATP as substrates and producing inorganic pyrophosphate. tRNA 3'-terminal CCA addition is required both for tRNA processing and repair. Also involved in tRNA surveillance by mediating tandem CCA addition to generate a CCACCA at the 3' terminus of unstable tRNAs. While stable tRNAs receive only 3'-terminal CCA, unstable tRNAs are marked with CCACCA and rapidly degraded. The protein is CCA-adding enzyme of Bacillus cytotoxicus (strain DSM 22905 / CIP 110041 / 391-98 / NVH 391-98).